The chain runs to 345 residues: Holliday junction branch migration complex subunit RuvB (345 aa).

Residues 1-183 are large ATPase domain (RuvB-L); the sequence is MTTQRLVSAA…FGIVHRLEFY (183 aa). ATP-binding positions include I22, R23, G64, K67, T68, T69, 130 to 132, R173, Y183, and R220; that span reads EDY. Mg(2+) is bound at residue T68. The small ATPAse domain (RuvB-S) stretch occupies residues 184–254; it reads SVEELSRIVA…VAGKALEMLD (71 aa). The tract at residues 257-345 is head domain (RuvB-H); it reads PNGFDQSDRR…NVNEELFGDE (89 aa). The DNA site is built by R293, R312, and R317.

This sequence belongs to the RuvB family. In terms of assembly, homohexamer. Forms an RuvA(8)-RuvB(12)-Holliday junction (HJ) complex. HJ DNA is sandwiched between 2 RuvA tetramers; dsDNA enters through RuvA and exits via RuvB. An RuvB hexamer assembles on each DNA strand where it exits the tetramer. Each RuvB hexamer is contacted by two RuvA subunits (via domain III) on 2 adjacent RuvB subunits; this complex drives branch migration. In the full resolvosome a probable DNA-RuvA(4)-RuvB(12)-RuvC(2) complex forms which resolves the HJ.

It localises to the cytoplasm. It carries out the reaction ATP + H2O = ADP + phosphate + H(+). In terms of biological role, the RuvA-RuvB-RuvC complex processes Holliday junction (HJ) DNA during genetic recombination and DNA repair, while the RuvA-RuvB complex plays an important role in the rescue of blocked DNA replication forks via replication fork reversal (RFR). RuvA specifically binds to HJ cruciform DNA, conferring on it an open structure. The RuvB hexamer acts as an ATP-dependent pump, pulling dsDNA into and through the RuvAB complex. RuvB forms 2 homohexamers on either side of HJ DNA bound by 1 or 2 RuvA tetramers; 4 subunits per hexamer contact DNA at a time. Coordinated motions by a converter formed by DNA-disengaged RuvB subunits stimulates ATP hydrolysis and nucleotide exchange. Immobilization of the converter enables RuvB to convert the ATP-contained energy into a lever motion, pulling 2 nucleotides of DNA out of the RuvA tetramer per ATP hydrolyzed, thus driving DNA branch migration. The RuvB motors rotate together with the DNA substrate, which together with the progressing nucleotide cycle form the mechanistic basis for DNA recombination by continuous HJ branch migration. Branch migration allows RuvC to scan DNA until it finds its consensus sequence, where it cleaves and resolves cruciform DNA. The polypeptide is Holliday junction branch migration complex subunit RuvB (Methylococcus capsulatus (strain ATCC 33009 / NCIMB 11132 / Bath)).